The primary structure comprises 199 residues: MDLYPESILNLIKSLSTLPGIGRRTAERLALHILHAPLHEAQTLANDILELKQKVTLCRTCFSLSDQPECRICSNPRRDASIICVVEKPTDIVAIEKSGAFSGLYHVLGGALSPMDGIGPDELRIRELFSRACSKTTTEVIIATGTNVEGEATAAYISDQLRKKGVNVTRIASGVPMGGDFQYVDQVTMQRAMEGRRGF.

The segment at 58 to 73 (CRTCFSLSDQPECRIC) adopts a C4-type zinc-finger fold. A Toprim domain is found at 81 to 176 (SIICVVEKPT…NVTRIASGVP (96 aa)).

It belongs to the RecR family.

Its function is as follows. May play a role in DNA repair. It seems to be involved in an RecBC-independent recombinational process of DNA repair. It may act with RecF and RecO. This chain is Recombination protein RecR, found in Desulforapulum autotrophicum (strain ATCC 43914 / DSM 3382 / VKM B-1955 / HRM2) (Desulfobacterium autotrophicum).